A 1941-amino-acid polypeptide reads, in one-letter code: Diacylglycerol kinase eta (1941 aa).

In terms of domain architecture, PH spans S93–A186. 2 Phorbol-ester/DAG-type zinc fingers span residues H206–C256 and P279–C330. One can recognise a DAGKc domain in the interval G361 to K497. Disordered regions lie at residues T1030–R1068, C1132–T1164, L1215–S1257, and R1276–D1295. Residues N1133–N1155 are compositionally biased toward low complexity. Residues W1878–N1941 enclose the SAM domain.

Belongs to the eukaryotic diacylglycerol kinase family.

Its subcellular location is the cytoplasm. The catalysed reaction is a 1,2-diacyl-sn-glycerol + ATP = a 1,2-diacyl-sn-glycero-3-phosphate + ADP + H(+). In terms of biological role, phosphorylates diacylglycerol (DAG) to generate phosphatidic acid (PA). The sequence is that of Diacylglycerol kinase eta from Drosophila grimshawi (Hawaiian fruit fly).